The primary structure comprises 360 residues: Protein RecA (360 aa).

ATP is bound at residue 69 to 76; sequence GPESSGKT.

It belongs to the RecA family.

The protein localises to the cytoplasm. Can catalyze the hydrolysis of ATP in the presence of single-stranded DNA, the ATP-dependent uptake of single-stranded DNA by duplex DNA, and the ATP-dependent hybridization of homologous single-stranded DNAs. It interacts with LexA causing its activation and leading to its autocatalytic cleavage. This is Protein RecA from Trichodesmium erythraeum (strain IMS101).